A 582-amino-acid chain; its full sequence is DNA mismatch repair protein MutL (582 aa).

It belongs to the DNA mismatch repair MutL/HexB family.

Functionally, this protein is involved in the repair of mismatches in DNA. It is required for dam-dependent methyl-directed DNA mismatch repair. May act as a 'molecular matchmaker', a protein that promotes the formation of a stable complex between two or more DNA-binding proteins in an ATP-dependent manner without itself being part of a final effector complex. In Chlamydia abortus (strain DSM 27085 / S26/3) (Chlamydophila abortus), this protein is DNA mismatch repair protein MutL.